A 373-amino-acid polypeptide reads, in one-letter code: MSEKKINLLDLDRKAMRALFADLGEKPFRADQLMKWIYHFGVSDFEEMTNINKVLRQKLAARCEIVAPEISSFQKSTDGTIKFAIHVGEGQEVETVYIPEDDRATLCVSSQVGCALECTFCSTAQQGFNRNLTVSEIVGQIWRVSHFLGFAKDTGDRPITNVVMMGMGEPLLNLANVIPAMDIMLDDFGFSLSKRRVTLSTSGVVPALDKLGDALDVALAVSIHAPNDELRDILVPVNKKYPLQEFLAGIRRYIAKSNANRGRVTVEYVMLDHINDSTEQAHELAKLMEDTPCKVNLIPFNPYPGSPYGRSSNSRIDRFSKVLMEYGLTVIVRKTRGDDIDAACGQLAGDIRDRTKRLAKKRMQENQISVTMN.

The Proton acceptor role is filled by glutamate 94. In terms of domain architecture, Radical SAM core spans 100 to 339; sequence EDDRATLCVS…VIVRKTRGDD (240 aa). Cysteines 107 and 344 form a disulfide. Residues cysteine 114, cysteine 118, and cysteine 121 each contribute to the [4Fe-4S] cluster site. S-adenosyl-L-methionine is bound by residues 168 to 169, serine 200, 222 to 224, and asparagine 301; these read GE and SIH. Residue cysteine 344 is the S-methylcysteine intermediate of the active site.

Belongs to the radical SAM superfamily. RlmN family. It depends on [4Fe-4S] cluster as a cofactor.

Its subcellular location is the cytoplasm. The enzyme catalyses adenosine(2503) in 23S rRNA + 2 reduced [2Fe-2S]-[ferredoxin] + 2 S-adenosyl-L-methionine = 2-methyladenosine(2503) in 23S rRNA + 5'-deoxyadenosine + L-methionine + 2 oxidized [2Fe-2S]-[ferredoxin] + S-adenosyl-L-homocysteine. It catalyses the reaction adenosine(37) in tRNA + 2 reduced [2Fe-2S]-[ferredoxin] + 2 S-adenosyl-L-methionine = 2-methyladenosine(37) in tRNA + 5'-deoxyadenosine + L-methionine + 2 oxidized [2Fe-2S]-[ferredoxin] + S-adenosyl-L-homocysteine. Specifically methylates position 2 of adenine 2503 in 23S rRNA and position 2 of adenine 37 in tRNAs. m2A2503 modification seems to play a crucial role in the proofreading step occurring at the peptidyl transferase center and thus would serve to optimize ribosomal fidelity. The protein is Dual-specificity RNA methyltransferase RlmN of Shewanella putrefaciens (strain CN-32 / ATCC BAA-453).